The following is a 400-amino-acid chain: Golgin-45 (400 aa).

The interval 1 to 36 (MEKMTTLKSFESKGILTSTPIRGAGDGMETEEPPKS) is disordered. Positions 22 to 26 (RGAGD) match the Tankyrase-binding motif motif. Ser-53 is subject to Phosphoserine. The stretch at 126-263 (LSEVKKVLEK…LSEREQFRQE (138 aa)) forms a coiled coil. Ser-356 bears the Phosphoserine mark. Residues 394 to 400 (QGELLAL) form an essential for interaction with GORASP2 region.

Interacts with GORASP2. Interacts with the GTP-bound form of RAB2, but not with other Golgi Rab proteins. Identified in a complex with RAB2 and GORASP2. In terms of processing, ADP-ribosylated by tankyrase TNKS and TNKS2. Poly-ADP-ribosylated protein is recognized by RNF146, followed by ubiquitination. Ubiquitinated by RNF146 when poly-ADP-ribosylated, leading to its degradation.

Its subcellular location is the golgi apparatus membrane. Its function is as follows. Required for normal Golgi structure and for protein transport from the endoplasmic reticulum (ER) through the Golgi apparatus to the cell surface. The sequence is that of Golgin-45 from Rattus norvegicus (Rat).